The sequence spans 375 residues: Probable neutral protease 2 homolog ARB_05817 (375 aa).

Positions 1-19 (MQVIVALAALGSLAAPALG) are cleaved as a signal peptide. Positions 20-189 (FSIPRGVPVS…RGPLTRINKR (170 aa)) are excised as a propeptide. Disulfide bonds link Cys197–Cys267 and Cys274–Cys292. Zn(2+) is bound at residue His317. Glu318 is a catalytic residue. Zn(2+)-binding residues include His321 and Asp332.

This sequence belongs to the peptidase M35 family. The cofactor is Zn(2+).

Its subcellular location is the secreted. The enzyme catalyses Preferential cleavage of bonds with hydrophobic residues in P1'. Also 3-Asn-|-Gln-4 and 8-Gly-|-Ser-9 bonds in insulin B chain.. Its function is as follows. Probable secreted metalloprotease that shows high activities on basic nuclear substrates such as histone and protamine. May be involved in virulence. This is Probable neutral protease 2 homolog ARB_05817 from Arthroderma benhamiae (strain ATCC MYA-4681 / CBS 112371) (Trichophyton mentagrophytes).